A 701-amino-acid polypeptide reads, in one-letter code: Elongation factor G (701 aa).

The tr-type G domain occupies 6 to 286; it reads KFTRNIGIAA…YVMELLPSPL (281 aa). Residues 15–22, 83–87, and 137–140 each bind GTP; these read AHIDAGKT, DTPGH, and NKMD.

The protein belongs to the TRAFAC class translation factor GTPase superfamily. Classic translation factor GTPase family. EF-G/EF-2 subfamily.

It localises to the cytoplasm. In terms of biological role, catalyzes the GTP-dependent ribosomal translocation step during translation elongation. During this step, the ribosome changes from the pre-translocational (PRE) to the post-translocational (POST) state as the newly formed A-site-bound peptidyl-tRNA and P-site-bound deacylated tRNA move to the P and E sites, respectively. Catalyzes the coordinated movement of the two tRNA molecules, the mRNA and conformational changes in the ribosome. In Cytophaga hutchinsonii (strain ATCC 33406 / DSM 1761 / CIP 103989 / NBRC 15051 / NCIMB 9469 / D465), this protein is Elongation factor G.